The sequence spans 898 residues: Cilium assembly protein DZIP1 (898 aa).

The segment at 14 to 66 (DPPGTHSSAGIPSLLSSPQSQPSSGSQSRPAPSTMSGPLTSSGASTSIPPPFK) is disordered. Residues 25-46 (PSLLSSPQSQPSSGSQSRPAPS) show a composition bias toward low complexity. Positions 47 to 60 (TMSGPLTSSGASTS) are enriched in polar residues. The stretch at 145 to 197 (LSISLQAAEERLLAEAREREQICVQLQKKTQDAKALKEELKQRKKIIASQQAM) forms a coiled coil. Residues 207–230 (HKCQHCEKAFMNASFLQSHMQRRH) form a C2H2-type zinc finger. Coiled-coil stretches lie at residues 242–353 (NQKK…VQTQ) and 407–447 (SAVS…ISSK). A compositionally biased stretch (polar residues) spans 435–463 (TSQNKQMKQISSKPPTITVQREGVSTPSP). 3 disordered regions span residues 435-509 (TSQN…SWQK), 585-739 (EQRV…WTDG), and 773-878 (KSLE…DAGT). Over residues 495 to 505 (SSISESPTENR) the composition is skewed to low complexity. The stretch at 573 to 590 (YRRALKEISHKLEQRVKE) forms a coiled coil. Residues 605-652 (VVQSRPRSSSFPSTVTRVMSGPASKQQRTPQPVPRSRTNVPHKTSTPL) show a composition bias toward polar residues. A compositionally biased stretch (acidic residues) spans 662 to 684 (SDEDSSEEEEEEEEEEESSDEES). Polar residues-rich tracts occupy residues 685–715 (PQMQKKTVLVNSSTAKAQNTAKTQSTAQSVR) and 723–734 (AEPTNVTTLSDS). Basic and acidic residues predominate over residues 797-815 (KPTDVRNTRQNAKKELKYS). A compositionally biased stretch (acidic residues) spans 816 to 826 (DDDDDDDDDWD). The segment covering 855 to 866 (DTSTSVWGSSTG) has biased composition (polar residues).

Belongs to the DZIP C2H2-type zinc-finger protein family. In terms of tissue distribution, expressed throughout the embryo starting at 12 hours.

Its subcellular location is the cell projection. It is found in the cilium. The protein resides in the cytoplasm. It localises to the cytoskeleton. The protein localises to the cilium basal body. Its subcellular location is the microtubule organizing center. It is found in the centrosome. The protein resides in the centriole. It localises to the nucleus. In terms of biological role, molecular adapter that recruits protein complexes required for cilium assembly and function to the cilium basal body. Required for establishment of left-right asymmetry during embryogenesis. Acts as a permissive factor that is required for the proper regulation of Hedgehog (Hh) target genes in response to Hh signals. Acts downstream of the Smoothened protein to modulate Gli activity in the somites of the developing embryo. The polypeptide is Cilium assembly protein DZIP1 (dzip1) (Danio rerio (Zebrafish)).